The chain runs to 147 residues: Arginine repressor (147 aa).

It belongs to the ArgR family.

It is found in the cytoplasm. It functions in the pathway amino-acid biosynthesis; L-arginine biosynthesis [regulation]. In terms of biological role, regulates arginine biosynthesis genes. The sequence is that of Arginine repressor from Chlamydia felis (strain Fe/C-56) (Chlamydophila felis).